The sequence spans 228 residues: Transcription termination/antitermination protein NusG (228 aa).

The protein belongs to the NusG family.

Functionally, participates in transcription elongation, termination and antitermination. The chain is Transcription termination/antitermination protein NusG from Mycobacterium leprae (strain TN).